The following is a 70-amino-acid chain: Ribosome modulation factor (70 aa).

The protein belongs to the ribosome modulation factor family.

The protein localises to the cytoplasm. Functionally, during stationary phase, converts 70S ribosomes to an inactive dimeric form (100S ribosomes). This Marinobacter adhaerens (strain DSM 23420 / HP15) protein is Ribosome modulation factor.